Reading from the N-terminus, the 1400-residue chain is DNA-directed RNA polymerase subunit beta' (1400 aa).

Zn(2+) is bound by residues Cys-70, Cys-72, Cys-85, and Cys-88. Residues Asp-460, Asp-462, and Asp-464 each contribute to the Mg(2+) site. Cys-814, Cys-887, Cys-894, and Cys-897 together coordinate Zn(2+).

It belongs to the RNA polymerase beta' chain family. In terms of assembly, the RNAP catalytic core consists of 2 alpha, 1 beta, 1 beta' and 1 omega subunit. When a sigma factor is associated with the core the holoenzyme is formed, which can initiate transcription. Mg(2+) serves as cofactor. The cofactor is Zn(2+).

The enzyme catalyses RNA(n) + a ribonucleoside 5'-triphosphate = RNA(n+1) + diphosphate. Its function is as follows. DNA-dependent RNA polymerase catalyzes the transcription of DNA into RNA using the four ribonucleoside triphosphates as substrates. The protein is DNA-directed RNA polymerase subunit beta' of Marinomonas sp. (strain MWYL1).